The following is a 691-amino-acid chain: DNA ligase (691 aa).

NAD(+) is bound by residues Asp-53–Asp-57, Ser-102–Leu-103, and Glu-135. The N6-AMP-lysine intermediate role is filled by Lys-137. The NAD(+) site is built by Arg-158, Glu-195, Lys-310, and Lys-334. Zn(2+) is bound by residues Cys-428, Cys-431, Cys-446, and Cys-452. Positions Ser-613–Glu-691 constitute a BRCT domain.

It belongs to the NAD-dependent DNA ligase family. LigA subfamily. The cofactor is Mg(2+). It depends on Mn(2+) as a cofactor.

The enzyme catalyses NAD(+) + (deoxyribonucleotide)n-3'-hydroxyl + 5'-phospho-(deoxyribonucleotide)m = (deoxyribonucleotide)n+m + AMP + beta-nicotinamide D-nucleotide.. In terms of biological role, DNA ligase that catalyzes the formation of phosphodiester linkages between 5'-phosphoryl and 3'-hydroxyl groups in double-stranded DNA using NAD as a coenzyme and as the energy source for the reaction. It is essential for DNA replication and repair of damaged DNA. The sequence is that of DNA ligase from Psychrobacter cryohalolentis (strain ATCC BAA-1226 / DSM 17306 / VKM B-2378 / K5).